The primary structure comprises 685 residues: Protein arginine N-methyltransferase 7 (685 aa).

SAM-dependent MTase PRMT-type domains are found at residues 14-355 and 364-685; these read QATW…YSLW and AESI…LKSI.

Belongs to the class I-like SAM-binding methyltransferase superfamily. Protein arginine N-methyltransferase family. PRMT7 subfamily.

In terms of biological role, essential arginine methyltransferase that can both catalyze the formation of omega-N monomethylarginine (MMA) and symmetrical dimethylarginine (sDMA). Specifically mediates the symmetrical dimethylation of arginine residues in the small nuclear ribonucleoproteins SmD1 and SmD3. The protein is Protein arginine N-methyltransferase 7 (Art7) of Drosophila willistoni (Fruit fly).